The sequence spans 190 residues: Potassium-transporting ATPase KdpC subunit (190 aa).

Residues 10–30 (TFIFLLLITGGVYPLLTTVLG) traverse the membrane as a helical segment.

This sequence belongs to the KdpC family. The system is composed of three essential subunits: KdpA, KdpB and KdpC.

It is found in the cell inner membrane. In terms of biological role, part of the high-affinity ATP-driven potassium transport (or Kdp) system, which catalyzes the hydrolysis of ATP coupled with the electrogenic transport of potassium into the cytoplasm. This subunit acts as a catalytic chaperone that increases the ATP-binding affinity of the ATP-hydrolyzing subunit KdpB by the formation of a transient KdpB/KdpC/ATP ternary complex. This chain is Potassium-transporting ATPase KdpC subunit, found in Shigella dysenteriae serotype 1 (strain Sd197).